A 55-amino-acid polypeptide reads, in one-letter code: uncharacterized protein (55 aa).

The first 25 residues, 1–25 (MKFVKAIWPFVAVAIVFMFMSAFKF), serve as a signal peptide directing secretion.

This is an uncharacterized protein from Bacillus subtilis (strain 168).